We begin with the raw amino-acid sequence, 449 residues long: C4-dicarboxylate transport protein (449 aa).

Transmembrane regions (helical) follow at residues Y20–P42, I62–V84, A91–V113, I164–A181, L202–K224, S239–F261, L344–I366, and A370–V389.

It belongs to the dicarboxylate/amino acid:cation symporter (DAACS) (TC 2.A.23) family.

The protein localises to the cell inner membrane. Responsible for the transport of dicarboxylates such as succinate, fumarate, and malate from the periplasm across the inner membrane. The polypeptide is C4-dicarboxylate transport protein (dctA) (Xylella fastidiosa (strain 9a5c)).